We begin with the raw amino-acid sequence, 586 residues long: Pescadillo homolog (586 aa).

Residues 1-54 (MGGLEKKKYERGSATNYITRNKARKKLQLSLPDFRRLCILKGIYPHEPKHKKKV) are required for 28S ribosomal RNA processing. The segment at 1-257 (MGGLEKKKYE…PKIESQAQAE (257 aa)) is sufficient for nucleolar localization. The residue at position 98 (Lys-98) is an N6-acetyllysine. Residues 305-414 (VTAQEEDRRK…LLLPVAEYFP (110 aa)) are sufficient for interaction with MAP1B. In terms of domain architecture, BRCT spans 321 to 414 (KHKKLFEGLK…LLLPVAEYFP (94 aa)). A disordered region spans residues 447 to 508 (GEDPGNLEEE…QQRLGGKKPQ (62 aa)). A compositionally biased stretch (acidic residues) spans 451–491 (GNLEEEEEDEDDEGDDSEGDGDVAVENEEEVVEAESEEEEE). Residue Lys-515 forms a Glycyl lysine isopeptide (Lys-Gly) (interchain with G-Cter in SUMO1); alternate linkage. Lys-515 is covalently cross-linked (Glycyl lysine isopeptide (Lys-Gly) (interchain with G-Cter in SUMO2); alternate). The tract at residues 537 to 586 (MMKKREKYLYQKIMFGKRRKIREANKLAEKRKAHDDAVRSEKKAKRTRPV) is required for 28S ribosomal RNA processing. Residues 562 to 577 (KLAEKRKAHDDAVRSE) show a composition bias toward basic and acidic residues. The disordered stretch occupies residues 562-586 (KLAEKRKAHDDAVRSEKKAKRTRPV).

It belongs to the pescadillo family. In terms of assembly, component of the PeBoW complex, composed of BOP1, PES1 and WDR12. The complex is held together by BOP1, which interacts with PES1 via its N-terminal domain and with WDR12 via a high-affinity interaction between the seven-bladed beta-propeller domains of the 2 proteins. The PeBoW complex associates with the 66S pre-ribosome. The PeBoW complex also associates with DDX27, PES1 interacts directly with DDX27. Interacts with IRS1 and UBTF. May interact with MAP1B. Sumoylated.

It is found in the nucleus. Its subcellular location is the nucleolus. It localises to the nucleoplasm. The protein localises to the chromosome. Functionally, component of the PeBoW complex, which is required for maturation of 28S and 5.8S ribosomal RNAs and formation of the 60S ribosome. This is Pescadillo homolog (Pes1) from Rattus norvegicus (Rat).